Reading from the N-terminus, the 274-residue chain is Rhamnulose-1-phosphate aldolase (274 aa).

Glu-117 is an active-site residue. Zn(2+) contacts are provided by His-141, His-143, and His-212.

The protein belongs to the aldolase class II family. RhaD subfamily. Homotetramer. Requires Zn(2+) as cofactor.

The protein resides in the cytoplasm. It catalyses the reaction L-rhamnulose 1-phosphate = (S)-lactaldehyde + dihydroxyacetone phosphate. It participates in carbohydrate degradation; L-rhamnose degradation; glycerone phosphate from L-rhamnose: step 3/3. Catalyzes the reversible cleavage of L-rhamnulose-1-phosphate to dihydroxyacetone phosphate (DHAP) and L-lactaldehyde. The chain is Rhamnulose-1-phosphate aldolase from Escherichia fergusonii (strain ATCC 35469 / DSM 13698 / CCUG 18766 / IAM 14443 / JCM 21226 / LMG 7866 / NBRC 102419 / NCTC 12128 / CDC 0568-73).